The primary structure comprises 296 residues: tRNA pseudouridine synthase B (296 aa).

Catalysis depends on Asp-38, which acts as the Nucleophile.

It belongs to the pseudouridine synthase TruB family. Type 1 subfamily.

The catalysed reaction is uridine(55) in tRNA = pseudouridine(55) in tRNA. Functionally, responsible for synthesis of pseudouridine from uracil-55 in the psi GC loop of transfer RNAs. The sequence is that of tRNA pseudouridine synthase B from Ehrlichia chaffeensis (strain ATCC CRL-10679 / Arkansas).